A 244-amino-acid chain; its full sequence is LNDHLSFNFDKFVPNQNNILFQGEASVSTTGVLQVTKVSKPATRSIGRALYAAPVHIWDSTTGRVASFETSFSFVVKDEPEKSNGVDGLTFFLAPANSQIPSGSSAGLFGLFNSSDNKSSNQIIAVEFDTYFGKTYNPWDPDFKHIGVDVNSIKSIKTVKWDWRNGEVANVVITYRAPTKSLTVSLSYPSDQTSNIVTASVDLKAILPEWVSVGFSAGVGNAAEFETHDVLSWYFTSNLEANPA.

N-linked (GlcNAc...) asparagine glycans are attached at residues Asn-113 and Asn-117. Glu-127 and Asp-129 together coordinate Mn(2+). Asp-129, Tyr-131, Asn-137, and Asp-142 together coordinate Ca(2+). Mn(2+)-binding residues include Asp-142 and His-145.

This sequence belongs to the leguminous lectin family. In terms of assembly, homotetramer.

In terms of biological role, di-N-acetylchitobiose-binding anti-H(O) lectin. This chain is Anti-H(O) lectin 1, found in Cytisophyllum sessilifolium (Sessile-leaved cytisus).